The primary structure comprises 142 residues: 3-hydroxyacyl-[acyl-carrier-protein] dehydratase FabZ (142 aa).

Residue His47 is part of the active site.

Belongs to the thioester dehydratase family. FabZ subfamily.

The protein localises to the cytoplasm. The catalysed reaction is a (3R)-hydroxyacyl-[ACP] = a (2E)-enoyl-[ACP] + H2O. Functionally, involved in unsaturated fatty acids biosynthesis. Catalyzes the dehydration of short chain beta-hydroxyacyl-ACPs and long chain saturated and unsaturated beta-hydroxyacyl-ACPs. The protein is 3-hydroxyacyl-[acyl-carrier-protein] dehydratase FabZ of Thermoanaerobacter sp. (strain X514).